The primary structure comprises 71 residues: UPF0346 protein Bcer98_1690 (71 aa).

The protein belongs to the UPF0346 family.

The protein is UPF0346 protein Bcer98_1690 of Bacillus cytotoxicus (strain DSM 22905 / CIP 110041 / 391-98 / NVH 391-98).